We begin with the raw amino-acid sequence, 454 residues long: Bifunctional protein GlmU (454 aa).

The pyrophosphorylase stretch occupies residues 1–233 (MTNRTCLAVI…RESAVGINNR (233 aa)). UDP-N-acetyl-alpha-D-glucosamine-binding positions include 11 to 14 (LAAG), Lys-25, Gln-79, and 84 to 85 (GT). A Mg(2+)-binding site is contributed by Asp-109. UDP-N-acetyl-alpha-D-glucosamine-binding residues include Gly-145, Glu-159, Asn-174, and Asn-231. Asn-231 contributes to the Mg(2+) binding site. Residues 234-254 (AELAEAEAVWQQKRRRELMLS) form a linker region. Positions 255–454 (GVTLIAPETV…AEEKAKKSGG (200 aa)) are N-acetyltransferase. 2 residues coordinate UDP-N-acetyl-alpha-D-glucosamine: Arg-320 and Lys-338. Catalysis depends on His-350, which acts as the Proton acceptor. UDP-N-acetyl-alpha-D-glucosamine is bound by residues Tyr-353 and Asn-364. Acetyl-CoA is bound by residues Ala-367, 373–374 (NY), Ser-410, and Arg-427.

This sequence in the N-terminal section; belongs to the N-acetylglucosamine-1-phosphate uridyltransferase family. In the C-terminal section; belongs to the transferase hexapeptide repeat family. As to quaternary structure, homotrimer. Requires Mg(2+) as cofactor.

It localises to the cytoplasm. It catalyses the reaction alpha-D-glucosamine 1-phosphate + acetyl-CoA = N-acetyl-alpha-D-glucosamine 1-phosphate + CoA + H(+). The catalysed reaction is N-acetyl-alpha-D-glucosamine 1-phosphate + UTP + H(+) = UDP-N-acetyl-alpha-D-glucosamine + diphosphate. The protein operates within nucleotide-sugar biosynthesis; UDP-N-acetyl-alpha-D-glucosamine biosynthesis; N-acetyl-alpha-D-glucosamine 1-phosphate from alpha-D-glucosamine 6-phosphate (route II): step 2/2. Its pathway is nucleotide-sugar biosynthesis; UDP-N-acetyl-alpha-D-glucosamine biosynthesis; UDP-N-acetyl-alpha-D-glucosamine from N-acetyl-alpha-D-glucosamine 1-phosphate: step 1/1. It functions in the pathway bacterial outer membrane biogenesis; LPS lipid A biosynthesis. In terms of biological role, catalyzes the last two sequential reactions in the de novo biosynthetic pathway for UDP-N-acetylglucosamine (UDP-GlcNAc). The C-terminal domain catalyzes the transfer of acetyl group from acetyl coenzyme A to glucosamine-1-phosphate (GlcN-1-P) to produce N-acetylglucosamine-1-phosphate (GlcNAc-1-P), which is converted into UDP-GlcNAc by the transfer of uridine 5-monophosphate (from uridine 5-triphosphate), a reaction catalyzed by the N-terminal domain. This is Bifunctional protein GlmU from Chelativorans sp. (strain BNC1).